Consider the following 190-residue polypeptide: GTP cyclohydrolase 1 (190 aa).

Zn(2+)-binding residues include Cys-80, His-83, and Cys-151.

It belongs to the GTP cyclohydrolase I family. As to quaternary structure, toroid-shaped homodecamer, composed of two pentamers of five dimers.

The enzyme catalyses GTP + H2O = 7,8-dihydroneopterin 3'-triphosphate + formate + H(+). The protein operates within cofactor biosynthesis; 7,8-dihydroneopterin triphosphate biosynthesis; 7,8-dihydroneopterin triphosphate from GTP: step 1/1. The chain is GTP cyclohydrolase 1 from Rickettsia akari (strain Hartford).